Consider the following 497-residue polypeptide: Iron-sulfur cluster assembly factor IBA57, mitochondrial (497 aa).

The transit peptide at 1–27 directs the protein to the mitochondrion; the sequence is MFISRRCRIKGFTLKNLLWFRSSSTRF. A disordered region spans residues 414 to 433; sequence PTLNPFTNKPPERTKRKQRP.

The protein belongs to the GcvT family. CAF17/IBA57 subfamily. Interacts with CCR4, ISA1 and ISA2.

The protein localises to the mitochondrion matrix. In terms of biological role, required for lysine and glutamate prototrophy and mitochondrial genome maintenance. Has a role in the maturation of mitochondrial aconitase-type and radical-SAM Fe/S proteins biotin synthase and lipoic acid synthase. The polypeptide is Iron-sulfur cluster assembly factor IBA57, mitochondrial (Saccharomyces cerevisiae (strain ATCC 204508 / S288c) (Baker's yeast)).